A 524-amino-acid chain; its full sequence is MDLTLWTYEGPPHVGAMRIAASMQGVHYVLHAPQGDTYADLLFTMIERRGQRPPVTYTTFQARDLGGDTAELVKRHVREAVDRFQPDALLVGESCTAELIQDQPGALAQGMGLTMPVVSLELPAYSKKENWGAAETLYQLVRGLLKQQVPAEPKHDPKRWQQQGRRPRVNLLGPSLLGFRCRDDVLEVQTLLTMHGIDVAVVAPLGAGVEDVHRLPEADLNICLYPEVAESTCLWLERNFGMPFSRTVPIGVGATHDFLVEVHTALGLEPPSPQEGYRRSRLPWYSESVDSTYLTGKRVFIFGDGSHAIAAARICSEELGFQVVGLGTYSREMARPVRAAAKGLGLEALICDDYLAVEAAMAEAAPELVLGTQMERHSAKRLGIPCAVISTPMHVQDVPARMSPQMGWEGANVIFDSWVHPLMMGLEEHLIGMFRHDFEFVDGHQSHLGHAGGSGASQESALSDVPEADEGYVVWTADGEAELKKIPFFVRGKVRRNAEAYARQVGCREISSETLYDAKAHFKA.

A [4Fe-4S] cluster-binding site is contributed by D36. The active-site Proton donor is the D290. 425-426 (GL) contributes to the substrate binding site.

It belongs to the ChlB/BchB/BchZ family. In terms of assembly, protochlorophyllide reductase is composed of three subunits; ChlL, ChlN and ChlB. Forms a heterotetramer of two ChlB and two ChlN subunits. [4Fe-4S] cluster is required as a cofactor.

The enzyme catalyses chlorophyllide a + oxidized 2[4Fe-4S]-[ferredoxin] + 2 ADP + 2 phosphate = protochlorophyllide a + reduced 2[4Fe-4S]-[ferredoxin] + 2 ATP + 2 H2O. It functions in the pathway porphyrin-containing compound metabolism; chlorophyll biosynthesis (light-independent). Component of the dark-operative protochlorophyllide reductase (DPOR) that uses Mg-ATP and reduced ferredoxin to reduce ring D of protochlorophyllide (Pchlide) to form chlorophyllide a (Chlide). This reaction is light-independent. The NB-protein (ChlN-ChlB) is the catalytic component of the complex. The sequence is that of Light-independent protochlorophyllide reductase subunit B from Parasynechococcus marenigrum (strain WH8102).